We begin with the raw amino-acid sequence, 610 residues long: Lipoprotein LpqB (610 aa).

The signal sequence occupies residues 1-27; it reads MGAEGGGRRRALRLGAYVGCGAVLLTG. C28 is lipidated: N-palmitoyl cysteine. A lipid anchor (S-diacylglycerol cysteine) is attached at C28.

It belongs to the LpqB lipoprotein family.

The protein resides in the cell membrane. This Streptomyces avermitilis (strain ATCC 31267 / DSM 46492 / JCM 5070 / NBRC 14893 / NCIMB 12804 / NRRL 8165 / MA-4680) protein is Lipoprotein LpqB.